A 114-amino-acid chain; its full sequence is T cell receptor alpha variable 24 (114 aa).

A signal peptide spans 1–22 (MEKNPLAAPLLILWFHLDCVSS). The region spanning 23-114 (ILNVEQSPQS…EDSATYLCAF (92 aa)) is the Ig-like domain. Asn-42 carries an N-linked (GlcNAc...) asparagine glycan. Cys-45 and Cys-112 are joined by a disulfide.

Alpha-beta TR is a heterodimer composed of an alpha and beta chain; disulfide-linked. The alpha-beta TR is associated with the transmembrane signaling CD3 coreceptor proteins to form the TR-CD3 (TcR or TCR). The assembly of alpha-beta TR heterodimers with CD3 occurs in the endoplasmic reticulum where a single alpha-beta TR heterodimer associates with one CD3D-CD3E heterodimer, one CD3G-CD3E heterodimer and one CD247 homodimer forming a stable octameric structure. CD3D-CD3E and CD3G-CD3E heterodimers preferentially associate with TR alpha and TR beta chains, respectively. The association of the CD247 homodimer is the last step of TcR assembly in the endoplasmic reticulum and is required for transport to the cell surface.

The protein resides in the cell membrane. Functionally, v region of the variable domain of T cell receptor (TR) alpha chain that participates in the antigen recognition. Alpha-beta T cell receptors are antigen specific receptors which are essential to the immune response and are present on the cell surface of T lymphocytes. Recognize peptide-major histocompatibility (MH) (pMH) complexes that are displayed by antigen presenting cells (APC), a prerequisite for efficient T cell adaptive immunity against pathogens. Binding of alpha-beta TR to pMH complex initiates TR-CD3 clustering on the cell surface and intracellular activation of LCK that phosphorylates the ITAM motifs of CD3G, CD3D, CD3E and CD247 enabling the recruitment of ZAP70. In turn ZAP70 phosphorylates LAT, which recruits numerous signaling molecules to form the LAT signalosome. The LAT signalosome propagates signal branching to three major signaling pathways, the calcium, the mitogen-activated protein kinase (MAPK) kinase and the nuclear factor NF-kappa-B (NF-kB) pathways, leading to the mobilization of transcription factors that are critical for gene expression and essential for T cell growth and differentiation. The T cell repertoire is generated in the thymus, by V-(D)-J rearrangement. This repertoire is then shaped by intrathymic selection events to generate a peripheral T cell pool of self-MH restricted, non-autoaggressive T cells. Post-thymic interaction of alpha-beta TR with the pMH complexes shapes TR structural and functional avidity. The chain is T cell receptor alpha variable 24 from Homo sapiens (Human).